Here is a 572-residue protein sequence, read N- to C-terminus: Arginine--tRNA ligase (572 aa).

A 'HIGH' region motif is present at residues 122–132 (PNLAKEMHVGH).

It belongs to the class-I aminoacyl-tRNA synthetase family. Monomer.

The protein localises to the cytoplasm. The catalysed reaction is tRNA(Arg) + L-arginine + ATP = L-arginyl-tRNA(Arg) + AMP + diphosphate. In Neisseria gonorrhoeae (strain ATCC 700825 / FA 1090), this protein is Arginine--tRNA ligase.